The primary structure comprises 1883 residues: Transmembrane protein 131 (1883 aa).

The first 22 residues, 1-22 (MGKRAGGGATGATTAAVSTSAG), serve as a signal peptide directing secretion. The Lumenal portion of the chain corresponds to 23–1117 (AGLEPAAARS…AEALPRPNWE (1095 aa)). Residues 109 to 283 (RFEPPMLDFH…ETKGVMRASF (175 aa)) are papD-L domain. Asn300 carries an N-linked (GlcNAc...) asparagine glycan. The residue at position 803 (Ser803) is a Phosphoserine. The helical transmembrane segment at 1118 to 1138 (LALYIIISGIMSALFLLVIGT) threads the bilayer. Over 1139-1883 (AYLEAQGIWE…WSNSHFPHEN (745 aa)) the chain is Cytoplasmic. 5 disordered regions span residues 1198-1580 (GAGG…DSLY), 1593-1656 (LKQR…KNGN), 1670-1712 (PGGN…PVSN), 1766-1789 (WESP…HTAT), and 1832-1858 (MGTE…TYNP). Low complexity predominate over residues 1237-1261 (AKNSSSTSSRTSAQAASSQSANKTS). The segment covering 1302 to 1316 (PQPPLPPPVPQPQEP) has biased composition (pro residues). A phosphoserine mark is found at Ser1322 and Ser1342. Basic and acidic residues-rich tracts occupy residues 1330 to 1343 (SHPE…HSSE) and 1353 to 1364 (AMDKDFDHHDSP). The residue at position 1375 (Ser1375) is a Phosphoserine. Residues 1380–1394 (SKGKGKPLQRKVKPP) show a composition bias toward basic residues. Positions 1395-1417 (KKQEEKEKKGKGKPQEDELKDSL) are enriched in basic and acidic residues. Residues 1423 to 1434 (SSTTTETSNPDT) show a composition bias toward low complexity. The span at 1436–1458 (PLLKEDTEKQKGKQAMPEKHESE) shows a compositional bias: basic and acidic residues. 2 stretches are compositionally biased toward polar residues: residues 1510-1526 (AMTS…TKGT) and 1542-1553 (PNSQELGNTSSS). Positions 1602 to 1611 (PASPSPPAAP) are enriched in pro residues. Positions 1619 to 1630 (SYSSIVNSSSSS) are enriched in low complexity. Positions 1678 to 1690 (VSSNKTGFSSSLG) are enriched in polar residues. Low complexity-rich tracts occupy residues 1773–1784 (PSPSWPASSGSP) and 1837–1849 (SPAP…SSPA). 2 positions are modified to phosphoserine: Ser1863 and Ser1871.

It belongs to the TMEM131 family. As to quaternary structure, interacts (via PapD-L domain) with COL1A2 (via C-terminus); the interaction is direct, may occur with other collagen proteins, and is involved in assembly and TRAPPIII ER-to-Golgi transport complex-dependent secretion of collagen. Interacts (via C-terminus) with TRAPPC8 (via C-terminus); the interaction is direct.

The protein localises to the membrane. Collagen binding transmembrane protein involved in collagen secretion by recruiting the ER-to-Golgi transport complex TRAPPIII. May play a role in the immune response to viral infection. This Homo sapiens (Human) protein is Transmembrane protein 131.